Here is a 715-residue protein sequence, read N- to C-terminus: Coiled-coil domain-containing protein 13 (715 aa).

Coiled coils occupy residues 16–105 (KAMQ…KERD) and 134–458 (ATKI…NVHY). The tract at residues 20–65 (EMQHKRLQKQMEKKREKELSLKSRADDQEEPLEVSDGLSLLHAGEP) is disordered. Positions 28–45 (KQMEKKREKELSLKSRAD) are enriched in basic and acidic residues. Phosphoserine occurs at positions 258, 469, and 536. 2 disordered regions span residues 482–541 (EDPG…EQKG) and 607–645 (LEPGKASASQRAAPRTKTGLPTSNNRHNPTGSEKKDPSF). Residues 554–608 (QAAEVERDRLTEFVTVLQKRVEESNSKLLESERKLQEERHRTVVLEQHLEKIRLE) adopt a coiled-coil conformation. Over residues 625 to 637 (GLPTSNNRHNPTG) the composition is skewed to polar residues. A coiled-coil region spans residues 653 to 683 (VESQMEELTTRLAIQVEENEMLKAALGSALR).

Interacts with PCM1, CEP290 and PCNT.

Its subcellular location is the cytoplasm. It localises to the cytoskeleton. The protein resides in the microtubule organizing center. It is found in the centrosome. The protein localises to the centriolar satellite. Its subcellular location is the cilium basal body. Functionally, required for primary cilia formation and promotes the localization of the ciliopathy protein BBS4 to both centriolar satellites and cilia. The sequence is that of Coiled-coil domain-containing protein 13 from Homo sapiens (Human).